A 464-amino-acid polypeptide reads, in one-letter code: 3-isopropylmalate dehydratase large subunit (464 aa).

[4Fe-4S] cluster is bound by residues cysteine 337, cysteine 397, and cysteine 400.

Belongs to the aconitase/IPM isomerase family. LeuC type 1 subfamily. As to quaternary structure, heterodimer of LeuC and LeuD. It depends on [4Fe-4S] cluster as a cofactor.

The enzyme catalyses (2R,3S)-3-isopropylmalate = (2S)-2-isopropylmalate. It participates in amino-acid biosynthesis; L-leucine biosynthesis; L-leucine from 3-methyl-2-oxobutanoate: step 2/4. Catalyzes the isomerization between 2-isopropylmalate and 3-isopropylmalate, via the formation of 2-isopropylmaleate. In Bacillus cytotoxicus (strain DSM 22905 / CIP 110041 / 391-98 / NVH 391-98), this protein is 3-isopropylmalate dehydratase large subunit.